A 194-amino-acid chain; its full sequence is Putative manganese efflux pump MntP (194 aa).

6 helical membrane-spanning segments follow: residues 8–28 (LLAI…GIIL), 36–56 (MLIM…LGWL), 61–81 (FSHL…AFLG), 109–129 (MAVA…FLGI), 138–158 (PAGI…IFGI), and 172–192 (LWGG…HLFF).

The protein belongs to the MntP (TC 9.B.29) family.

Its subcellular location is the cell inner membrane. In terms of biological role, probably functions as a manganese efflux pump. This is Putative manganese efflux pump MntP from Bacteroides fragilis (strain ATCC 25285 / DSM 2151 / CCUG 4856 / JCM 11019 / LMG 10263 / NCTC 9343 / Onslow / VPI 2553 / EN-2).